Reading from the N-terminus, the 206-residue chain is Thymidylate kinase (206 aa).

11–18 lines the ATP pocket; that stretch reads GIDGAGKT.

It belongs to the thymidylate kinase family.

The catalysed reaction is dTMP + ATP = dTDP + ADP. Its function is as follows. Phosphorylation of dTMP to form dTDP in both de novo and salvage pathways of dTTP synthesis. The chain is Thymidylate kinase from Burkholderia cenocepacia (strain ATCC BAA-245 / DSM 16553 / LMG 16656 / NCTC 13227 / J2315 / CF5610) (Burkholderia cepacia (strain J2315)).